The following is a 303-amino-acid chain: MADKSKFTEYIDKALEKSKETALSHLFFTYQGIAYPITMCTSETFQALDTFEARHDDIVLASYPKCGSNWILHIVSELIYAVSKKKYKYPEFPVLECGDSEKYQRMKGFPSPRILATHLHYDKLPGSIFKNKAKILVIFRNPTDTAVSFFHFHNDVPDIPSYGSWDELFRQFMKGQVSWGSYFDFAINWNKHLDGDNVKFILYEDLKENLAAGIKQIPEFLGFFLTGEQIQTISVQSTFQAMRAKSQDTHGAVGPFLFRKGEVGDWKNLFSEIQNQEMDEKFKECLAGTSLGAKLKYESYCQG.

65 to 70 (KCGSNW) contacts 3'-phosphoadenylyl sulfate. His118 acts as the Proton acceptor in catalysis. Residues Arg140, Ser148, Tyr203, 237–242 (STFQAM), and 259–261 (RKG) contribute to the 3'-phosphoadenylyl sulfate site.

It belongs to the sulfotransferase 1 family.

The protein localises to the cytoplasm. The protein resides in the cytosol. The catalysed reaction is thyroxine + 3'-phosphoadenylyl sulfate = thyroxine sulfate + adenosine 3',5'-bisphosphate + H(+). In terms of biological role, sulfotransferase that utilizes 3'-phospho-5'-adenylyl sulfate (PAPS) as sulfonate donor to catalyze the sulfate conjugation of thyroxine. Involved in the metabolism of thyroxine. The chain is Sulfotransferase 6B1 (SULT6B1) from Gorilla gorilla gorilla (Western lowland gorilla).